Here is a 322-residue protein sequence, read N- to C-terminus: 2-methylene-furan-3-one reductase (322 aa).

Residues Lys59, 174–175 (GV), 197–200 (STKK), Tyr215, Ile253, 264–266 (FVL), and 311–312 (RA) each bind NADP(+). Position 59 (Lys59) interacts with substrate.

Belongs to the zinc-containing alcohol dehydrogenase family. Quinone oxidoreductase subfamily. Monomer.

The catalysed reaction is 4-hydroxy-2,5-dimethyl-furan-3(2H)-one + NADP(+) = 4-hydroxy-5-methyl-2-methylenefuran-3(2H)-one + NADPH + H(+). Its function is as follows. Enone oxidoreductase involved in the biosynthesis of 4-hydroxy-2,5-dimethyl-3(2H)-furanone (HDMF or furaneol), the key flavor compound in strawberries. The protein is 2-methylene-furan-3-one reductase (EO) of Fragaria vesca (Woodland strawberry).